A 308-amino-acid chain; its full sequence is Tetraspanin-12 (308 aa).

Residues 1–41 (MANRRQPVQHRAQQRVYRQSQIRYAPGAGGESEISCCVKYS) lie on the Cytoplasmic side of the membrane. A helical membrane pass occupies residues 42 to 62 (VFSFNVIFFLLGFGLLLFGVW). The Extracellular segment spans residues 63 to 86 (AQIEKNTFVNMLSKASKLYLDPTW). Residues 87–107 (PLLIVGFLTFIIGFSGCVGSL) traverse the membrane as a helical segment. The Cytoplasmic segment spans residues 108-112 (RENTS). The helical transmembrane segment at 113 to 133 (FLTFYSTLLGLLLIAEFSAGV) threads the bilayer. Residues 134–268 (FAYACRDQLD…PKLQLWLNNN (135 aa)) are Extracellular-facing. Asn-213 is a glycosylation site (N-linked (GlcNAc...) asparagine). A helical membrane pass occupies residues 269 to 289 (MLLVAVSMVIIAIIQVLGICF). Residues 290–308 (AQNLKSDILAQRAKWYYTH) are Cytoplasmic-facing.

It belongs to the tetraspanin (TM4SF) family. As to quaternary structure, may interact with protease sup-17; the interaction promotes sup-17 cell membrane localization. Expressed in the germline.

The protein resides in the cell membrane. It is found in the cytoplasmic vesicle membrane. The protein localises to the endosome membrane. It localises to the early endosome membrane. Its subcellular location is the late endosome membrane. The protein resides in the recycling endosome membrane. It is found in the golgi apparatus. The protein localises to the trans-Golgi network membrane. Functions redundantly with tsp-14 isoform a to regulate body size, embryonic and vulva development. Functions redundantly with tsp-14 (isoforms a and b) to regulate cell fate specification in the postembryonic mesodermal M lineage and male development. May regulate BMP-like Sma/Mab signaling by mediating protease sup-17 trafficking to the cell surface. Together with tsp-14, functions redundantly to maintain cell surface levels of the BMP type II receptor daf-4 (but not BMP type I receptor sma-6), probably by regulating endosomal sorting of receptors and their targeting to degradative lysosomes. Together with tsp-14 involved in maintaining the structural and functional integrity of the endosomal network. Together with tsp-14, probably acts by modulating the activation of glp-1, a Notch-like receptor, to regulate germline maturation. Probably acts by modulating the activation of lin-12, a Notch-like receptor, to regulate cell fate specification such as the anchor cell/ventral uterine precursor cell decision. This chain is Tetraspanin-12, found in Caenorhabditis elegans.